We begin with the raw amino-acid sequence, 269 residues long: 5'-nucleotidase SurE (269 aa).

A divalent metal cation is bound by residues Asp11, Asp12, Ser43, and Asn101.

Belongs to the SurE nucleotidase family. The cofactor is a divalent metal cation.

It localises to the cytoplasm. It catalyses the reaction a ribonucleoside 5'-phosphate + H2O = a ribonucleoside + phosphate. Nucleotidase that shows phosphatase activity on nucleoside 5'-monophosphates. This chain is 5'-nucleotidase SurE, found in Prochlorococcus marinus (strain MIT 9211).